The primary structure comprises 1083 residues: DNA-directed RNA polymerase subunit beta (1083 aa).

Belongs to the RNA polymerase beta chain family. As to quaternary structure, in plastids the minimal PEP RNA polymerase catalytic core is composed of four subunits: alpha, beta, beta', and beta''. When a (nuclear-encoded) sigma factor is associated with the core the holoenzyme is formed, which can initiate transcription.

It localises to the plastid. Its subcellular location is the chloroplast. It catalyses the reaction RNA(n) + a ribonucleoside 5'-triphosphate = RNA(n+1) + diphosphate. DNA-dependent RNA polymerase catalyzes the transcription of DNA into RNA using the four ribonucleoside triphosphates as substrates. In Acorus calamus var. americanus (American sweet flag), this protein is DNA-directed RNA polymerase subunit beta.